The sequence spans 80 residues: Exodeoxyribonuclease 7 small subunit (80 aa).

The protein belongs to the XseB family. In terms of assembly, heterooligomer composed of large and small subunits.

It is found in the cytoplasm. The enzyme catalyses Exonucleolytic cleavage in either 5'- to 3'- or 3'- to 5'-direction to yield nucleoside 5'-phosphates.. Its function is as follows. Bidirectionally degrades single-stranded DNA into large acid-insoluble oligonucleotides, which are then degraded further into small acid-soluble oligonucleotides. In Enterobacter sp. (strain 638), this protein is Exodeoxyribonuclease 7 small subunit.